We begin with the raw amino-acid sequence, 405 residues long: MPEPVAEPALNGLRLNLRIVSIVMFNFASYLTIGLPLAVLPGYVHDVMGFSAFWAGLVISLQYFATLLSRPHAGRYADSLGPKKIVVFGLCGCFLSGLGYLTAGLTASLPVISLLLLCLGRVILGIGQSFAGTGSTLWGVGVVGSLHIGRVISWNGIVTYGAMAMGAPLGVVFYHWGGLQALALIIMGVALVAILLAIPRPTVKASKGKPLPFRAVLGRVWLYGMALALASAGFGVIATFITLFYDAKGWDGAAFALTLFSCAFVGTRLLFPNGINRIGGLNVAMICFSVEIIGLLLVGVATMPWMAKIGVLLAGAGFSLVFPALGVVAVKAVPQQNQGAALATYTVFMDLSLGVTGPLAGLVMSWAGVPVIYLAAAGLVAIALLLTWRLKKRPPEHVPEAASSS.

The Cytoplasmic portion of the chain corresponds to 1 to 18 (MPEPVAEPALNGLRLNLR). The helical transmembrane segment at 19–39 (IVSIVMFNFASYLTIGLPLAV) threads the bilayer. Topologically, residues 40–46 (LPGYVHD) are periplasmic. The helical transmembrane segment at 47–67 (VMGFSAFWAGLVISLQYFATL) threads the bilayer. Over 68–84 (LSRPHAGRYADSLGPKK) the chain is Cytoplasmic. A helical transmembrane segment spans residues 85–105 (IVVFGLCGCFLSGLGYLTAGL). Position 106 (Thr106) is a topological domain, periplasmic. The chain crosses the membrane as a helical span at residues 107–127 (ASLPVISLLLLCLGRVILGIG). Residues 128 to 155 (QSFAGTGSTLWGVGVVGSLHIGRVISWN) are Cytoplasmic-facing. A helical membrane pass occupies residues 156 to 176 (GIVTYGAMAMGAPLGVVFYHW). Position 177 (Gly177) is a topological domain, periplasmic. Residues 178-198 (GLQALALIIMGVALVAILLAI) form a helical membrane-spanning segment. The Cytoplasmic segment spans residues 199–223 (PRPTVKASKGKPLPFRAVLGRVWLY). The chain crosses the membrane as a helical span at residues 224 to 244 (GMALALASAGFGVIATFITLF). The Periplasmic portion of the chain corresponds to 245-251 (YDAKGWD). A helical membrane pass occupies residues 252–272 (GAAFALTLFSCAFVGTRLLFP). The Cytoplasmic portion of the chain corresponds to 273-282 (NGINRIGGLN). Residues 283–303 (VAMICFSVEIIGLLLVGVATM) form a helical membrane-spanning segment. Residues 304-308 (PWMAK) lie on the Periplasmic side of the membrane. A helical transmembrane segment spans residues 309 to 329 (IGVLLAGAGFSLVFPALGVVA). At 330 to 343 (VKAVPQQNQGAALA) the chain is on the cytoplasmic side. The helical transmembrane segment at 344–364 (TYTVFMDLSLGVTGPLAGLVM) threads the bilayer. Position 365 (Ser365) is a topological domain, periplasmic. The chain crosses the membrane as a helical span at residues 366–386 (WAGVPVIYLAAAGLVAIALLL). The Cytoplasmic segment spans residues 387 to 405 (TWRLKKRPPEHVPEAASSS).

It belongs to the major facilitator superfamily. YhhS family.

It localises to the cell inner membrane. In terms of biological role, confers high-level resistance to glyphosate when overexpressed. Overexpression has no effect on intracellular arabinose concentrations. This is an uncharacterized protein from Escherichia coli (strain K12).